We begin with the raw amino-acid sequence, 226 residues long: Leucyl/phenylalanyl-tRNA--protein transferase (226 aa).

The protein belongs to the L/F-transferase family.

It localises to the cytoplasm. It carries out the reaction N-terminal L-lysyl-[protein] + L-leucyl-tRNA(Leu) = N-terminal L-leucyl-L-lysyl-[protein] + tRNA(Leu) + H(+). It catalyses the reaction N-terminal L-arginyl-[protein] + L-leucyl-tRNA(Leu) = N-terminal L-leucyl-L-arginyl-[protein] + tRNA(Leu) + H(+). The enzyme catalyses L-phenylalanyl-tRNA(Phe) + an N-terminal L-alpha-aminoacyl-[protein] = an N-terminal L-phenylalanyl-L-alpha-aminoacyl-[protein] + tRNA(Phe). In terms of biological role, functions in the N-end rule pathway of protein degradation where it conjugates Leu, Phe and, less efficiently, Met from aminoacyl-tRNAs to the N-termini of proteins containing an N-terminal arginine or lysine. This chain is Leucyl/phenylalanyl-tRNA--protein transferase, found in Pseudomonas fluorescens (strain Pf0-1).